Consider the following 82-residue polypeptide: RNA-binding protein Hfq (82 aa).

In terms of domain architecture, Sm spans 9 to 69; sequence DQLLNTARKD…ISTIIPAKII (61 aa).

This sequence belongs to the Hfq family. Homohexamer.

In terms of biological role, RNA chaperone that binds small regulatory RNA (sRNAs) and mRNAs to facilitate mRNA translational regulation in response to envelope stress, environmental stress and changes in metabolite concentrations. Also binds with high specificity to tRNAs. The sequence is that of RNA-binding protein Hfq from Leptospira borgpetersenii serovar Hardjo-bovis (strain L550).